The following is a 301-amino-acid chain: D-alanine--D-alanine ligase (301 aa).

The region spanning 99–294 (KCILKAANIR…FSELIDMIID (196 aa)) is the ATP-grasp domain. Residue 126–181 (IEGMGYPVVVKPTHGGSSVATFIIKEEKDIKNAVTEAFKWDSEVIIEKFIKGDEIT) coordinates ATP. 3 residues coordinate Mg(2+): Asp-248, Glu-261, and Asn-263.

The protein belongs to the D-alanine--D-alanine ligase family. Mg(2+) is required as a cofactor. The cofactor is Mn(2+).

It is found in the cytoplasm. The enzyme catalyses 2 D-alanine + ATP = D-alanyl-D-alanine + ADP + phosphate + H(+). It functions in the pathway cell wall biogenesis; peptidoglycan biosynthesis. Functionally, cell wall formation. This is D-alanine--D-alanine ligase from Clostridium botulinum (strain Eklund 17B / Type B).